The chain runs to 463 residues: Hydroxyacid-oxoacid transhydrogenase, mitochondrial (463 aa).

This sequence belongs to the iron-containing alcohol dehydrogenase family. Hydroxyacid-oxoacid transhydrogenase subfamily.

Its subcellular location is the mitochondrion. It carries out the reaction (S)-3-hydroxybutanoate + 2-oxoglutarate = (R)-2-hydroxyglutarate + acetoacetate. The catalysed reaction is 4-hydroxybutanoate + 2-oxoglutarate = (R)-2-hydroxyglutarate + succinate semialdehyde. Catalyzes the cofactor-independent reversible oxidation of gamma-hydroxybutyrate (GHB) to succinic semialdehyde (SSA) coupled to reduction of 2-ketoglutarate (2-KG) to D-2-hydroxyglutarate (D-2-HG). L-3-hydroxybutyrate (L-3-OHB) is also a substrate for HOT when using 2-KG as hydrogen acceptor, resulting in the formation of D-2-HG. The sequence is that of Hydroxyacid-oxoacid transhydrogenase, mitochondrial (adhfe1) from Xenopus laevis (African clawed frog).